The sequence spans 600 residues: Pyranose dehydrogenase 3 (600 aa).

The N-terminal stretch at 1–25 (MLPRVARLNTHLVSLALLGFQITYG) is a signal peptide. N-linked (GlcNAc...) asparagine glycosylation is found at Asn-99 and Asn-114. His-127 bears the Tele-8alpha-FAD histidine mark. Residues Asn-173, Asn-199, Asn-275, Asn-342, Asn-399, and Asn-507 are each glycosylated (N-linked (GlcNAc...) asparagine). The active-site Proton acceptor is His-535. The N-linked (GlcNAc...) asparagine glycan is linked to Asn-546. Residue His-579 is part of the active site.

This sequence belongs to the GMC oxidoreductase family. In terms of assembly, monomer. The cofactor is FAD. Post-translationally, N-glycosylated.

Its subcellular location is the secreted. It catalyses the reaction pyranose + acceptor = pyranos-2-ulose + reduced acceptor.. The enzyme catalyses pyranose + acceptor = pyranos-3-ulose + reduced acceptor.. It carries out the reaction pyranose + acceptor = pyranos-2,3-diulose + reduced acceptor.. The catalysed reaction is a pyranoside + acceptor = a pyranosid-3-ulose + reduced acceptor.. It catalyses the reaction a pyranoside + acceptor = a pyranosid-3,4-diulose + reduced acceptor.. Its function is as follows. Catalyzes the single-oxidation or sequential double oxidation reaction of carbohydrates primarily at carbon-2 and/or carbon-3 with the concomitant reduction of the flavin. The enzyme exhibits a broad sugar substrate specificity, oxidizing different aldopyranoses to the corresponding C-1, C-2, C-3 or C-1,2, C-2,3 and C-3,4 (di)dehydro sugars with substrate-specific regioselectivity. Accepts only a narrow range of electron acceptors such as substituted benzoquinones and complexed metal ions and reacts extremely slowly with O(2) as acceptor. May play a role in the natural recycling of plant matter by oxidizing all major monosaccharides in lignocellulose and by reducing quinone compounds or reactive radical species generated during lignin depolymerization. The sequence is that of Pyranose dehydrogenase 3 from Leucoagaricus meleagris (Western flat-topped agaric).